Reading from the N-terminus, the 135-residue chain is Protein NrdI (135 aa).

This sequence belongs to the NrdI family.

Probably involved in ribonucleotide reductase function. The polypeptide is Protein NrdI (Salmonella gallinarum (strain 287/91 / NCTC 13346)).